The following is a 457-amino-acid chain: Argininosuccinate lyase (457 aa).

The protein belongs to the lyase 1 family. Argininosuccinate lyase subfamily.

It is found in the cytoplasm. The enzyme catalyses 2-(N(omega)-L-arginino)succinate = fumarate + L-arginine. The protein operates within amino-acid biosynthesis; L-arginine biosynthesis; L-arginine from L-ornithine and carbamoyl phosphate: step 3/3. The chain is Argininosuccinate lyase from Yersinia pseudotuberculosis serotype O:1b (strain IP 31758).